A 340-amino-acid chain; its full sequence is Glyceraldehyde-3-phosphate dehydrogenase (340 aa).

NAD(+)-binding positions include 11 to 12 (SI) and Gly-111. 140 to 142 (SCN) contributes to the D-glyceraldehyde 3-phosphate binding site. Residue Cys-141 is the Nucleophile of the active site. Arg-169 is a binding site for NAD(+). 195–196 (HG) contacts D-glyceraldehyde 3-phosphate. NAD(+) is bound at residue Gln-303.

Belongs to the glyceraldehyde-3-phosphate dehydrogenase family. In terms of assembly, homotetramer.

It localises to the cytoplasm. It catalyses the reaction D-glyceraldehyde 3-phosphate + phosphate + NADP(+) = (2R)-3-phospho-glyceroyl phosphate + NADPH + H(+). The catalysed reaction is D-glyceraldehyde 3-phosphate + phosphate + NAD(+) = (2R)-3-phospho-glyceroyl phosphate + NADH + H(+). The protein operates within carbohydrate degradation; glycolysis; pyruvate from D-glyceraldehyde 3-phosphate: step 1/5. The protein is Glyceraldehyde-3-phosphate dehydrogenase of Methanococcus vannielii (strain ATCC 35089 / DSM 1224 / JCM 13029 / OCM 148 / SB).